Here is a 408-residue protein sequence, read N- to C-terminus: Peptidase T (408 aa).

His78 provides a ligand contact to Zn(2+). Asp80 is an active-site residue. Asp140 contributes to the Zn(2+) binding site. Glu173 functions as the Proton acceptor in the catalytic mechanism. Residues Glu174, Asp196, and His379 each coordinate Zn(2+).

This sequence belongs to the peptidase M20B family. Zn(2+) is required as a cofactor.

It is found in the cytoplasm. It carries out the reaction Release of the N-terminal residue from a tripeptide.. In terms of biological role, cleaves the N-terminal amino acid of tripeptides. This chain is Peptidase T, found in Citrobacter koseri (strain ATCC BAA-895 / CDC 4225-83 / SGSC4696).